The primary structure comprises 54 residues: Protein PIGBOS1 (54 aa).

Topologically, residues 1-4 (MFRR) are mitochondrial intermembrane. Residues 5–25 (LTFAQLLFATVLGIAGGVYIF) traverse the membrane as a helical segment. The Cytoplasmic portion of the chain corresponds to 26-54 (QPVFEQYAKDQKELKEKMQLVQESEEKKS). The tract at residues 30–36 (EQYAKDQ) is required for interaction with CLCC1.

As to quaternary structure, homooligomer. Interacts (via C-terminus) with endoplasmic reticulum (ER) protein CLCC1; the interaction occurs at the mitochondria-associated ER membrane, a zone of contact between the ER and mitochondrial membranes, but does not appear to play a role in ER-mitochondria tethering and is not affected by ER stress.

Its subcellular location is the mitochondrion outer membrane. Plays a role in regulation of the unfolded protein response triggered by endoplasmic reticulum (ER) stress resulting from the presence of unfolded proteins in the ER lumen. This chain is Protein PIGBOS1, found in Homo sapiens (Human).